The following is a 355-amino-acid chain: uncharacterized protein (355 aa).

It belongs to the serpin family. Poxviruses subfamily.

This is an uncharacterized protein from Vertebrata (FPV).